A 350-amino-acid polypeptide reads, in one-letter code: MIDTDRLIAAQPQGSEVHVDHAIRPRRLAEYIGQPRVREQLDIFISAARKRGDSLDHTLVFGPPGLGKTTLANIIAAEMDVDIKSTSGPVLERAGDLAAMLTNLQAGDVLFIDEIHRLPASVEEVLYPAMEDYQLDIMIGEGPAARSIKLDLPAFTLVGATTRAGLLTSPLRDRFGIVQRLEFYAVEELTEIVVRSAHLLGVDAERDGAAEIARRARGTPRIANRLLRRVRDFAEVRGDGRLTAAIADQALNMLHVDRHGLDHMDRRLLMAMIEKFDGGPVGVDSLAAAISEERDTIEDVLEPYLIQQGFMMRTARGRVVTRSAYEHFGLTPTDAVATAVPLTPPGESDA.

Positions 4–184 (TDRLIAAQPQ…FGIVQRLEFY (181 aa)) are large ATPase domain (RuvB-L). Residues Ile23, Arg24, Gly65, Lys68, Thr69, Thr70, 131-133 (EDY), Arg174, Tyr184, and Arg221 each bind ATP. Mg(2+) is bound at residue Thr69. Positions 185-255 (AVEELTEIVV…IADQALNMLH (71 aa)) are small ATPAse domain (RuvB-S). The head domain (RuvB-H) stretch occupies residues 258–350 (RHGLDHMDRR…PLTPPGESDA (93 aa)). Residues Arg294, Arg313, and Arg318 each contribute to the DNA site.

Belongs to the RuvB family. Homohexamer. Forms an RuvA(8)-RuvB(12)-Holliday junction (HJ) complex. HJ DNA is sandwiched between 2 RuvA tetramers; dsDNA enters through RuvA and exits via RuvB. An RuvB hexamer assembles on each DNA strand where it exits the tetramer. Each RuvB hexamer is contacted by two RuvA subunits (via domain III) on 2 adjacent RuvB subunits; this complex drives branch migration. In the full resolvosome a probable DNA-RuvA(4)-RuvB(12)-RuvC(2) complex forms which resolves the HJ.

Its subcellular location is the cytoplasm. The catalysed reaction is ATP + H2O = ADP + phosphate + H(+). In terms of biological role, the RuvA-RuvB-RuvC complex processes Holliday junction (HJ) DNA during genetic recombination and DNA repair, while the RuvA-RuvB complex plays an important role in the rescue of blocked DNA replication forks via replication fork reversal (RFR). RuvA specifically binds to HJ cruciform DNA, conferring on it an open structure. The RuvB hexamer acts as an ATP-dependent pump, pulling dsDNA into and through the RuvAB complex. RuvB forms 2 homohexamers on either side of HJ DNA bound by 1 or 2 RuvA tetramers; 4 subunits per hexamer contact DNA at a time. Coordinated motions by a converter formed by DNA-disengaged RuvB subunits stimulates ATP hydrolysis and nucleotide exchange. Immobilization of the converter enables RuvB to convert the ATP-contained energy into a lever motion, pulling 2 nucleotides of DNA out of the RuvA tetramer per ATP hydrolyzed, thus driving DNA branch migration. The RuvB motors rotate together with the DNA substrate, which together with the progressing nucleotide cycle form the mechanistic basis for DNA recombination by continuous HJ branch migration. Branch migration allows RuvC to scan DNA until it finds its consensus sequence, where it cleaves and resolves cruciform DNA. The sequence is that of Holliday junction branch migration complex subunit RuvB from Chromohalobacter salexigens (strain ATCC BAA-138 / DSM 3043 / CIP 106854 / NCIMB 13768 / 1H11).